The chain runs to 233 residues: H-2 class II histocompatibility antigen, A-R alpha chain (233 aa).

Residues 1–88 (EDDIEADHVG…KRSNFTPAAN (88 aa)) form an alpha-1 region. The Extracellular portion of the chain corresponds to 1–195 (EDDIEADHVG…IPAPMSELTE (195 aa)). Residues 89–182 (EAPQATVFPK…GLEEPVLKHW (94 aa)) are alpha-2. Positions 91–183 (PQATVFPKSP…LEEPVLKHWE (93 aa)) constitute an Ig-like C1-type domain. Cys111 and Cys167 are oxidised to a cystine. Asn122 carries an N-linked (GlcNAc...) asparagine glycan. The tract at residues 183-195 (EPEIPAPMSELTE) is connecting peptide. The helical transmembrane segment at 196–221 (TVVCALGLSVGLVGIVVGTIFIIQGL) threads the bilayer. At 222–233 (RSGGTSRHPGPL) the chain is on the cytoplasmic side.

The protein belongs to the MHC class II family.

Its subcellular location is the membrane. The chain is H-2 class II histocompatibility antigen, A-R alpha chain (H2-Aa) from Mus musculus (Mouse).